A 298-amino-acid chain; its full sequence is uncharacterized protein (298 aa).

One can recognise an ABC transporter domain in the interval leucine 2–serine 229. Residue glycine 34–threonine 41 participates in ATP binding.

Belongs to the ABC transporter superfamily.

Its subcellular location is the cell membrane. This is an uncharacterized protein from Bacillus subtilis (strain 168).